Here is a 223-residue protein sequence, read N- to C-terminus: N-terminal Xaa-Pro-Lys N-methyltransferase 1 (223 aa).

Methionine 1 is subject to N-acetylmethionine. Threonine 2 is subject to N-acetylthreonine; in N-terminal Xaa-Pro-Lys N-methyltransferase 1, N-terminally processed. Residues glycine 69, arginine 74, 91-93 (DVT), 119-120 (LQ), and glutamine 135 each bind S-adenosyl-L-methionine.

The protein belongs to the methyltransferase superfamily. NTM1 family.

It localises to the nucleus. The catalysed reaction is N-terminal L-alanyl-L-prolyl-L-lysyl-[protein] + 3 S-adenosyl-L-methionine = N-terminal N,N,N-trimethyl-L-alanyl-L-prolyl-L-lysyl-[protein] + 3 S-adenosyl-L-homocysteine + 3 H(+). The enzyme catalyses N-terminal L-seryl-L-prolyl-L-lysyl-[protein] + 3 S-adenosyl-L-methionine = N-terminal N,N,N-trimethyl-L-seryl-L-prolyl-L-lysyl-[protein] + 3 S-adenosyl-L-homocysteine + 3 H(+). It carries out the reaction N-terminal L-prolyl-L-prolyl-L-lysyl-[protein] + 2 S-adenosyl-L-methionine = N-terminal N,N-dimethyl-L-prolyl-L-prolyl-L-lysyl-[protein] + 2 S-adenosyl-L-homocysteine + 2 H(+). In terms of biological role, distributive alpha-N-methyltransferase that methylates the N-terminus of target proteins containing the N-terminal motif [Ala/Gly/Pro/Ser]-Pro-Lys when the initiator Met is cleaved. Specifically catalyzes mono-, di- or tri-methylation of the exposed alpha-amino group of the Ala, Gly or Ser residue in the [Ala/Gly/Ser]-Pro-Lys motif and mono- or di-methylation of Pro in the Pro-Pro-Lys motif. Some of the substrates may be primed by NTMT2-mediated monomethylation. Catalyzes the trimethylation of the N-terminal Gly in CENPA (after removal of Met-1). Responsible for the N-terminal methylation of KLHL31, MYL2, MYL3, RB1, RCC1, RPL23A and SET. Required during mitosis for normal bipolar spindle formation and chromosome segregation via its action on RCC1. The chain is N-terminal Xaa-Pro-Lys N-methyltransferase 1 (Ntmt1) from Mus musculus (Mouse).